We begin with the raw amino-acid sequence, 350 residues long: S-adenosylmethionine:tRNA ribosyltransferase-isomerase (350 aa).

Belongs to the QueA family. Monomer.

The protein localises to the cytoplasm. The catalysed reaction is 7-aminomethyl-7-carbaguanosine(34) in tRNA + S-adenosyl-L-methionine = epoxyqueuosine(34) in tRNA + adenine + L-methionine + 2 H(+). It functions in the pathway tRNA modification; tRNA-queuosine biosynthesis. Transfers and isomerizes the ribose moiety from AdoMet to the 7-aminomethyl group of 7-deazaguanine (preQ1-tRNA) to give epoxyqueuosine (oQ-tRNA). The chain is S-adenosylmethionine:tRNA ribosyltransferase-isomerase from Bacillus cereus (strain G9842).